The following is a 445-amino-acid chain: Glutamate--tRNA ligase 1 (445 aa).

A 'HIGH' region motif is present at residues 8–18; sequence PSPTGKLHVGN. Residues 239 to 243 carry the 'KMSKS' region motif; it reads KLSKR. An ATP-binding site is contributed by lysine 242.

This sequence belongs to the class-I aminoacyl-tRNA synthetase family. Glutamate--tRNA ligase type 1 subfamily. As to quaternary structure, monomer.

It is found in the cytoplasm. The catalysed reaction is tRNA(Glu) + L-glutamate + ATP = L-glutamyl-tRNA(Glu) + AMP + diphosphate. In terms of biological role, catalyzes the attachment of glutamate to tRNA(Glu) in a two-step reaction: glutamate is first activated by ATP to form Glu-AMP and then transferred to the acceptor end of tRNA(Glu). This chain is Glutamate--tRNA ligase 1, found in Maricaulis maris (strain MCS10) (Caulobacter maris).